We begin with the raw amino-acid sequence, 273 residues long: Pyridoxal phosphate homeostasis protein (273 aa).

The residue at position 6 (S6) is a Phosphoserine. K47 is subject to N6-(pyridoxal phosphate)lysine. Y69 is modified (phosphotyrosine). K125 carries the N6-succinyllysine modification. Phosphoserine is present on residues S226 and S244. Basic and acidic residues predominate over residues 251-260 (DYSKKTDKPA). The interval 251 to 273 (DYSKKTDKPAAELQAPEEVAQAH) is disordered.

It belongs to the pyridoxal phosphate-binding protein YggS/PROSC family.

Its function is as follows. Pyridoxal 5'-phosphate (PLP)-binding protein, which may be involved in intracellular homeostatic regulation of pyridoxal 5'-phosphate (PLP), the active form of vitamin B6. The protein is Pyridoxal phosphate homeostasis protein of Bos taurus (Bovine).